The sequence spans 184 residues: Elongation factor P (184 aa).

This sequence belongs to the elongation factor P family.

Its subcellular location is the cytoplasm. It participates in protein biosynthesis; polypeptide chain elongation. Involved in peptide bond synthesis. Stimulates efficient translation and peptide-bond synthesis on native or reconstituted 70S ribosomes in vitro. Probably functions indirectly by altering the affinity of the ribosome for aminoacyl-tRNA, thus increasing their reactivity as acceptors for peptidyl transferase. In Thermus thermophilus (strain ATCC BAA-163 / DSM 7039 / HB27), this protein is Elongation factor P.